Reading from the N-terminus, the 354-residue chain is Green-sensitive opsin-3 (354 aa).

Topologically, residues 1–39 (MSGLNGFEGDNFYIPMSNRTGLVRDPFVYEQYYLAEPWQ) are extracellular. Asparagine 18 is a glycosylation site (N-linked (GlcNAc...) asparagine). A helical transmembrane segment spans residues 40 to 64 (FKLLACYMFFLICLGLPINGFTLFV). At 65-76 (TAQHKKLQQPLN) the chain is on the cytoplasmic side. The helical transmembrane segment at 77-102 (FILVNLAVAGMIMVCFGFTITISSAV) threads the bilayer. The Extracellular segment spans residues 103–116 (NGYFYFGPTACAIE). Cysteines 113 and 190 form a disulfide. A helical transmembrane segment spans residues 117–136 (GFMATLGGEVALWSLVVLAI). Residues 137 to 155 (ERYIVVCKPMGSFKFSASH) lie on the Cytoplasmic side of the membrane. A helical transmembrane segment spans residues 156–179 (ALGGIGFTWFMAMTCAAPPLVGWS). Topologically, residues 180-205 (RYIPEGLQCSCGPDYYTLNPKYNNES) are extracellular. N-linked (GlcNAc...) asparagine glycosylation is present at asparagine 203. Residues 206-233 (YVIYMFVVHFIVPVTVIFFTYGRLVCTV) traverse the membrane as a helical segment. Over 234 to 255 (KSAAAAQQDSASTQKAEKEVTR) the chain is Cytoplasmic. Residues 256–279 (MVILMVVGFLVAWTPYATVAAWIF) form a helical membrane-spanning segment. The Extracellular segment spans residues 280-287 (FNKGAAFT). A helical transmembrane segment spans residues 288 to 312 (AQFMAVPAFFSKSSALFNPIIYVLL). Residue lysine 299 is modified to N6-(retinylidene)lysine. Topologically, residues 313–354 (NKQFRNCMLTTLFCGKNPLGDEESSTVSTKTEVSTVSSVSPA) are cytoplasmic.

Belongs to the G-protein coupled receptor 1 family. Opsin subfamily. As to expression, the color pigments are found in the cone photoreceptor cells.

The protein localises to the membrane. Its function is as follows. Visual pigments are the light-absorbing molecules that mediate vision. They consist of an apoprotein, opsin, covalently linked to cis-retinal. The protein is Green-sensitive opsin-3 (RH11) of Psalidodon fasciatus (Banded astyanax).